Consider the following 534-residue polypeptide: CTP synthase (534 aa).

The tract at residues 1-267 is amidoligase domain; the sequence is MTKYIFVTGG…DQIVCDHLKL (267 aa). Ser13 contributes to the CTP binding site. UTP is bound at residue Ser13. 14–19 is a binding site for ATP; the sequence is SIGKGI. L-glutamine is bound at residue Tyr54. ATP is bound at residue Asp71. Mg(2+) is bound by residues Asp71 and Glu141. Residues 148–150, 188–193, and Lys224 contribute to the CTP site; these read DIE and KTKPTQ. UTP-binding positions include 188-193 and Lys224; that span reads KTKPTQ. Residue 240 to 242 participates in ATP binding; that stretch reads RDV. Residues 292–534 form the Glutamine amidotransferase type-1 domain; sequence KIALVGKYVE…FVTAAIKNSN (243 aa). Gly354 is a binding site for L-glutamine. Residue Cys381 is the Nucleophile; for glutamine hydrolysis of the active site. L-glutamine-binding positions include 382–385, Glu405, and Arg463; that span reads LGMQ. Catalysis depends on residues His508 and Glu510.

Belongs to the CTP synthase family. In terms of assembly, homotetramer.

The enzyme catalyses UTP + L-glutamine + ATP + H2O = CTP + L-glutamate + ADP + phosphate + 2 H(+). It carries out the reaction L-glutamine + H2O = L-glutamate + NH4(+). The catalysed reaction is UTP + NH4(+) + ATP = CTP + ADP + phosphate + 2 H(+). Its pathway is pyrimidine metabolism; CTP biosynthesis via de novo pathway; CTP from UDP: step 2/2. Its activity is regulated as follows. Allosterically activated by GTP, when glutamine is the substrate; GTP has no effect on the reaction when ammonia is the substrate. The allosteric effector GTP functions by stabilizing the protein conformation that binds the tetrahedral intermediate(s) formed during glutamine hydrolysis. Inhibited by the product CTP, via allosteric rather than competitive inhibition. Functionally, catalyzes the ATP-dependent amination of UTP to CTP with either L-glutamine or ammonia as the source of nitrogen. Regulates intracellular CTP levels through interactions with the four ribonucleotide triphosphates. The protein is CTP synthase of Streptococcus pyogenes serotype M4 (strain MGAS10750).